We begin with the raw amino-acid sequence, 1353 residues long: Patatin-like phospholipase domain-containing protein ZK370.4 (1353 aa).

A helical membrane pass occupies residues 12 to 32 (IFLVTFIYNHVLLILFTVCII). A compositionally biased stretch (low complexity) spans 49 to 64 (TPSSASSSATPSSRNS). Disordered regions lie at residues 49 to 188 (TPSS…STAF) and 199 to 218 (SRSYFRQNQENNKDTRVRPP). Polar residues predominate over residues 91-123 (SPKSGTPTNTQTIEPPTSLNLNMVNSASGSNLS). 2 stretches are compositionally biased toward basic residues: residues 126-138 (RRMRKRDWAKKLY) and 170-184 (PRRRSKHGNSSRRRQ). Residues 245–372 (LKML…VITR), 444–581 (FGLV…VLRR), and 570–692 (IYLP…LGQY) each bind a nucleoside 3',5'-cyclic phosphate. Residues 942–1108 (LVLGGGGARG…VNNVPADVMR (167 aa)) enclose the PNPLA domain. A GXGXXG motif is present at residues 946–951 (GGGARG). The GXSXG signature appears at 973–977 (GTSIG). Catalysis depends on serine 975, which acts as the Nucleophile. Aspartate 1095 functions as the Proton acceptor in the catalytic mechanism. Residues 1095-1097 (DGG) carry the DGA/G motif. Disordered stretches follow at residues 1230-1249 (EKETRKFKRQQSRREKPDVS), 1274-1293 (SMSLNPSANGPVGRAGDHFL), and 1305-1353 (YEEE…PPSS). Over residues 1328–1337 (GPPSSSSSGG) the composition is skewed to low complexity.

The protein belongs to the NTE family.

It is found in the membrane. In Caenorhabditis elegans, this protein is Patatin-like phospholipase domain-containing protein ZK370.4.